We begin with the raw amino-acid sequence, 812 residues long: Valine--tRNA ligase (812 aa).

A 'HIGH' region motif is present at residues 47 to 57; the sequence is PTISGQLHIGH. The 'KMSKS' region motif lies at 536–540; sequence KMSKS. Residue Lys-539 participates in ATP binding.

Belongs to the class-I aminoacyl-tRNA synthetase family. ValS type 2 subfamily. In terms of assembly, monomer.

It localises to the cytoplasm. The enzyme catalyses tRNA(Val) + L-valine + ATP = L-valyl-tRNA(Val) + AMP + diphosphate. Functionally, catalyzes the attachment of valine to tRNA(Val). As ValRS can inadvertently accommodate and process structurally similar amino acids such as threonine, to avoid such errors, it has a 'posttransfer' editing activity that hydrolyzes mischarged Thr-tRNA(Val) in a tRNA-dependent manner. This Ehrlichia ruminantium (strain Gardel) protein is Valine--tRNA ligase.